We begin with the raw amino-acid sequence, 394 residues long: Na(+)/H(+) antiporter NhaA (394 aa).

11 consecutive transmembrane segments (helical) span residues 14-34, 59-79, 95-115, 125-145, 154-174, 179-199, 213-233, 254-274, 292-312, 328-348, and 363-383; these read AGGL…NSAL, LLLW…GLEV, VFPA…YLLF, GWAI…ALLG, VFLL…IALF, VSLQ…YMNW, LVLW…GVIV, GLHP…NAGV, IATG…WLAV, IFAV…IASL, and LGIL…LRLV.

It belongs to the NhaA Na(+)/H(+) (TC 2.A.33) antiporter family.

It is found in the cell inner membrane. It catalyses the reaction Na(+)(in) + 2 H(+)(out) = Na(+)(out) + 2 H(+)(in). Na(+)/H(+) antiporter that extrudes sodium in exchange for external protons. The chain is Na(+)/H(+) antiporter NhaA from Yersinia pseudotuberculosis serotype IB (strain PB1/+).